Reading from the N-terminus, the 616-residue chain is Proline--tRNA ligase (616 aa).

Belongs to the class-II aminoacyl-tRNA synthetase family. ProS type 1 subfamily. Homodimer.

It localises to the cytoplasm. It catalyses the reaction tRNA(Pro) + L-proline + ATP = L-prolyl-tRNA(Pro) + AMP + diphosphate. Its function is as follows. Catalyzes the attachment of proline to tRNA(Pro) in a two-step reaction: proline is first activated by ATP to form Pro-AMP and then transferred to the acceptor end of tRNA(Pro). As ProRS can inadvertently accommodate and process non-cognate amino acids such as alanine and cysteine, to avoid such errors it has two additional distinct editing activities against alanine. One activity is designated as 'pretransfer' editing and involves the tRNA(Pro)-independent hydrolysis of activated Ala-AMP. The other activity is designated 'posttransfer' editing and involves deacylation of mischarged Ala-tRNA(Pro). The misacylated Cys-tRNA(Pro) is not edited by ProRS. In Streptococcus gordonii (strain Challis / ATCC 35105 / BCRC 15272 / CH1 / DL1 / V288), this protein is Proline--tRNA ligase.